A 421-amino-acid chain; its full sequence is 3-phosphoshikimate 1-carboxyvinyltransferase (421 aa).

Positions 21, 22, and 26 each coordinate 3-phosphoshikimate. Lys-21 provides a ligand contact to phosphoenolpyruvate. Gly-93 and Arg-121 together coordinate phosphoenolpyruvate. Positions 166, 167, 168, 194, 310, and 337 each coordinate 3-phosphoshikimate. Gln-168 is a binding site for phosphoenolpyruvate. The active-site Proton acceptor is the Asp-310. Arg-341, Arg-382, and Lys-407 together coordinate phosphoenolpyruvate.

Belongs to the EPSP synthase family. In terms of assembly, monomer.

Its subcellular location is the cytoplasm. The catalysed reaction is 3-phosphoshikimate + phosphoenolpyruvate = 5-O-(1-carboxyvinyl)-3-phosphoshikimate + phosphate. The protein operates within metabolic intermediate biosynthesis; chorismate biosynthesis. Catalyzes the transfer of the enolpyruvyl moiety of phosphoenolpyruvate (PEP) to the 5-hydroxyl of shikimate-3-phosphate (S3P) to produce enolpyruvyl shikimate-3-phosphate and inorganic phosphate. This Methanoregula boonei (strain DSM 21154 / JCM 14090 / 6A8) protein is 3-phosphoshikimate 1-carboxyvinyltransferase.